Consider the following 163-residue polypeptide: Crossover junction endodeoxyribonuclease RuvC (163 aa).

Active-site residues include Asp-9, Glu-76, and Asp-148. Mg(2+) is bound by residues Asp-9, Glu-76, and Asp-148.

The protein belongs to the RuvC family. As to quaternary structure, homodimer which binds Holliday junction (HJ) DNA. The HJ becomes 2-fold symmetrical on binding to RuvC with unstacked arms; it has a different conformation from HJ DNA in complex with RuvA. In the full resolvosome a probable DNA-RuvA(4)-RuvB(12)-RuvC(2) complex forms which resolves the HJ. It depends on Mg(2+) as a cofactor.

The protein resides in the cytoplasm. The enzyme catalyses Endonucleolytic cleavage at a junction such as a reciprocal single-stranded crossover between two homologous DNA duplexes (Holliday junction).. In terms of biological role, the RuvA-RuvB-RuvC complex processes Holliday junction (HJ) DNA during genetic recombination and DNA repair. Endonuclease that resolves HJ intermediates. Cleaves cruciform DNA by making single-stranded nicks across the HJ at symmetrical positions within the homologous arms, yielding a 5'-phosphate and a 3'-hydroxyl group; requires a central core of homology in the junction. The consensus cleavage sequence is 5'-(A/T)TT(C/G)-3'. Cleavage occurs on the 3'-side of the TT dinucleotide at the point of strand exchange. HJ branch migration catalyzed by RuvA-RuvB allows RuvC to scan DNA until it finds its consensus sequence, where it cleaves and resolves the cruciform DNA. In Nostoc punctiforme (strain ATCC 29133 / PCC 73102), this protein is Crossover junction endodeoxyribonuclease RuvC.